The following is a 269-amino-acid chain: MRPPVPSAPLALWVLGCFSLLLWLWALCTACHRKRAQRQQTGLQDSLVPVEMPLLRQTHLCSLSKSDTRLHELHRGPRSSIAPRPASMDLLHPRWLEMSRGSTRSQVPNSAFPPRQLPRAPPAAPATAPSTSSEATYSNVGLAAIPRASLAASPVVWAGTQLTISCARLGPGAEYACIQKHKGTEQGCQELQQKAKVIPATQMDVLYSRVCKPKRRDPRPVTDQLNLQDGRTSLPLGSDVEYEAINLRGQDMKQGPLENVYESIKEMGL.

Over M1 to S7 the chain is Extracellular. A helical; Signal-anchor for type III membrane protein membrane pass occupies residues A8–C28. 2 S-palmitoyl cysteine lipidation sites follow: C28 and C31. Over T29–L269 the chain is Cytoplasmic. The segment at S102–S133 is disordered. A compositionally biased stretch (pro residues) spans R115–A124. Phosphotyrosine is present on residues Y137, Y175, and Y207. The interval Y137–V140 is interaction with GRB2. 2 interaction with CSK regions span residues Y175 to I178 and Y207 to V210. Phosphotyrosine; by LYN or LCK occurs at positions 242 and 261. The interaction with LCK and PIK3R1 stretch occupies residues Y242–I245. Residues Y261–I264 form an interaction with LCK, PLCG2 and PIK3R1 region. S263 carries the post-translational modification Phosphoserine.

In terms of assembly, when phosphorylated in response to TCR stimulation and/or CD4 costimulation, interacts with LCK, CSK, FYN, PTPN11/SHP2, GRB2, PIK3R1 and GRAP2. When phosphorylated in response to BCR activation, interacts with LYN, PIK3R1, PLCG2 and GRB2. In terms of processing, palmitoylation of Cys-28 and Cys-31 is required for raft targeting. Post-translationally, phosphorylated on tyrosines upon TCR activation and/or CD4 coreceptor stimulation, or upon BCR stimulation; which leads to the recruitment of SH2-containing proteins. As to expression, expressed in spleen and lung. Present in primary B-cells and peripheral T-cells (at protein level).

It localises to the cell membrane. Its function is as follows. Involved in BCR (B-cell antigen receptor)-mediated signaling in B-cells and TCR (T-cell antigen receptor)-mediated T-cell signaling in T-cells. In absence of TCR signaling, may be involved in CD4-mediated inhibition of T-cell activation. Couples activation of these receptors and their associated kinases with distal intracellular events such as calcium mobilization or MAPK activation through the recruitment of PLCG2, GRB2, GRAP2, and other signaling molecules. The protein is Lck-interacting transmembrane adapter 1 (Lime1) of Mus musculus (Mouse).